Reading from the N-terminus, the 422-residue chain is Probable protein phosphatase 2C 43 (422 aa).

The PPM-type phosphatase domain occupies 117 to 393 (SSGSYADKGD…DNVTVVVICF (277 aa)). Residues Asp-163, Gly-164, Asp-341, and Asp-384 each contribute to the Mn(2+) site.

Belongs to the PP2C family. Mg(2+) serves as cofactor. Requires Mn(2+) as cofactor.

The enzyme catalyses O-phospho-L-seryl-[protein] + H2O = L-seryl-[protein] + phosphate. The catalysed reaction is O-phospho-L-threonyl-[protein] + H2O = L-threonyl-[protein] + phosphate. This is Probable protein phosphatase 2C 43 from Arabidopsis thaliana (Mouse-ear cress).